We begin with the raw amino-acid sequence, 280 residues long: Pantothenate synthetase (280 aa).

Residue 26–33 (MGNLHEGH) coordinates ATP. Residue His-33 is the Proton donor of the active site. Gln-57 is a (R)-pantoate binding site. Residue Gln-57 coordinates beta-alanine. 145 to 148 (GKKD) contacts ATP. (R)-pantoate is bound at residue Gln-151. Residues Val-174 and 182–185 (LSSR) contribute to the ATP site.

This sequence belongs to the pantothenate synthetase family. As to quaternary structure, homodimer.

The protein resides in the cytoplasm. The enzyme catalyses (R)-pantoate + beta-alanine + ATP = (R)-pantothenate + AMP + diphosphate + H(+). It functions in the pathway cofactor biosynthesis; (R)-pantothenate biosynthesis; (R)-pantothenate from (R)-pantoate and beta-alanine: step 1/1. In terms of biological role, catalyzes the condensation of pantoate with beta-alanine in an ATP-dependent reaction via a pantoyl-adenylate intermediate. This Bordetella avium (strain 197N) protein is Pantothenate synthetase.